A 435-amino-acid chain; its full sequence is Putrescine transporter PotE (435 aa).

Transmembrane regions (helical) follow at residues 8-28, 39-59, 95-115, 117-137, 148-168, 185-205, 224-244, 275-295, 320-340, 354-374, 386-406, and 409-429; these read IGVV…GIIM, ISIV…YAFA, LVIA…ELFG, ILSP…ATVL, ISSF…IIGW, VPTF…FLGL, IAVL…TNVI, VIMG…QFTI, APVV…LMTI, LAVV…AVLL, TTVF…YAAG, and AMLY…FVSY.

It belongs to the amino acid-polyamine-organocation (APC) superfamily. Basic amino acid/polyamine antiporter (APA) (TC 2.A.3.2) family.

Its subcellular location is the cell inner membrane. It catalyses the reaction putrescine(in) + H(+)(in) = putrescine(out) + H(+)(out). It carries out the reaction putrescine(in) + L-ornithine(out) = putrescine(out) + L-ornithine(in). In terms of biological role, catalyzes both the uptake and excretion of putrescine. The uptake of putrescine is dependent on the membrane potential and the excretion involves putrescine-ornithine antiporter activity. In Haemophilus influenzae (strain ATCC 51907 / DSM 11121 / KW20 / Rd), this protein is Putrescine transporter PotE.